The following is a 298-amino-acid chain: Ribosomal protein L11 methyltransferase (298 aa).

4 residues coordinate S-adenosyl-L-methionine: threonine 152, glycine 173, aspartate 195, and asparagine 234.

This sequence belongs to the methyltransferase superfamily. PrmA family.

Its subcellular location is the cytoplasm. It catalyses the reaction L-lysyl-[protein] + 3 S-adenosyl-L-methionine = N(6),N(6),N(6)-trimethyl-L-lysyl-[protein] + 3 S-adenosyl-L-homocysteine + 3 H(+). Functionally, methylates ribosomal protein L11. This is Ribosomal protein L11 methyltransferase from Ralstonia nicotianae (strain ATCC BAA-1114 / GMI1000) (Ralstonia solanacearum).